The primary structure comprises 83 residues: Apolipoprotein C-I, acidic form (83 aa).

The first 26 residues, 1 to 26 (MRLFLSLPVLVVVLSMVLEGPAPAQG), serve as a signal peptide directing secretion.

Belongs to the apolipoprotein C1 family.

It localises to the secreted. The polypeptide is Apolipoprotein C-I, acidic form (APOC1A) (Pan troglodytes (Chimpanzee)).